Consider the following 154-residue polypeptide: Ribosome maturation factor RimP (154 aa).

Belongs to the RimP family.

It is found in the cytoplasm. Functionally, required for maturation of 30S ribosomal subunits. This chain is Ribosome maturation factor RimP, found in Salmonella gallinarum (strain 287/91 / NCTC 13346).